A 102-amino-acid chain; its full sequence is NADH-quinone oxidoreductase subunit K (102 aa).

The next 3 helical transmembrane spans lie at 4–24 (IGLN…LVGV), 31–51 (LMLF…FAAI), and 65–85 (FFVI…LIVW).

It belongs to the complex I subunit 4L family. NDH-1 is composed of 14 different subunits. Subunits NuoA, H, J, K, L, M, N constitute the membrane sector of the complex.

The protein resides in the cell inner membrane. The catalysed reaction is a quinone + NADH + 5 H(+)(in) = a quinol + NAD(+) + 4 H(+)(out). In terms of biological role, NDH-1 shuttles electrons from NADH, via FMN and iron-sulfur (Fe-S) centers, to quinones in the respiratory chain. The immediate electron acceptor for the enzyme in this species is believed to be ubiquinone. Couples the redox reaction to proton translocation (for every two electrons transferred, four hydrogen ions are translocated across the cytoplasmic membrane), and thus conserves the redox energy in a proton gradient. The sequence is that of NADH-quinone oxidoreductase subunit K from Sulfurimonas denitrificans (strain ATCC 33889 / DSM 1251) (Thiomicrospira denitrificans (strain ATCC 33889 / DSM 1251)).